We begin with the raw amino-acid sequence, 521 residues long: Feruloyl esterase B (521 aa).

Positions 1–17 (MKVASLLSLALPGAALA) are cleaved as a signal peptide. 2 disulfides stabilise this stretch: cysteine 26–cysteine 72 and cysteine 61–cysteine 111. 6 N-linked (GlcNAc...) asparagine glycosylation sites follow: asparagine 37, asparagine 51, asparagine 77, asparagine 95, asparagine 144, and asparagine 177. Cystine bridges form between cysteine 184–cysteine 438, cysteine 253–cysteine 270, and cysteine 279–cysteine 288. Serine 185 serves as the catalytic Acyl-ester intermediate. Positions 254, 257, 259, 261, and 263 each coordinate Ca(2+). N-linked (GlcNAc...) asparagine glycans are attached at residues asparagine 284, asparagine 347, asparagine 352, and asparagine 378. Active-site charge relay system residues include aspartate 397 and histidine 437. Residues asparagine 488 and asparagine 511 are each glycosylated (N-linked (GlcNAc...) asparagine). Cysteine 498 and cysteine 520 are oxidised to a cystine.

Belongs to the tannase family. As to quaternary structure, homodimer. Glycosylated.

It is found in the secreted. The enzyme catalyses feruloyl-polysaccharide + H2O = ferulate + polysaccharide.. Inhibited by the specific serine esterase inhibitor AEBSF. In terms of biological role, involved in degradation of plant cell walls. Hydrolyzes of the feruloyl-arabinose ester bond in arabinoxylans as well as the feruloyl-galactose and feruloyl-arabinose ester bonds in pectin. In Aspergillus niger, this protein is Feruloyl esterase B (faeB).